The chain runs to 365 residues: Coxsackievirus and adenovirus receptor homolog (365 aa).

Residues 1-19 (MELLLRFLLLCGVADFTRG) form the signal peptide. Ig-like C2-type domains are found at residues 20 to 136 (LSIT…IQLT) and 141 to 228 (PSGI…LRLD). At 20-238 (LSITTPEQMI…VVPPSNRAGT (219 aa)) the chain is on the extracellular side. 3 cysteine pairs are disulfide-bonded: Cys-41–Cys-120, Cys-146–Cys-223, and Cys-162–Cys-212. Asn-106 carries an N-linked (GlcNAc...) asparagine glycan. Residues 239-259 (IAGAVIGTLLALVLIALIVFC) traverse the membrane as a helical segment. S-palmitoyl cysteine attachment occurs at residues Cys-259 and Cys-260. Topologically, residues 260–365 (CHKKRREEKY…PAQSKDGSIV (106 aa)) are cytoplasmic. The segment covering 269–282 (YEKEVHHDIREDVP) has biased composition (basic and acidic residues). Positions 269–343 (YEKEVHHDIR…TLPPAKVAAP (75 aa)) are disordered. Residues 286 to 322 (SRTSTARSYIGSNHSSLGSMSPSNMEGYSKTQYNQVP) are compositionally biased toward polar residues. Residues Ser-297, Ser-304, Ser-306, Ser-323, Ser-332, and Ser-363 each carry the phosphoserine modification. The PDZ-binding motif lies at 360-365 (KDGSIV).

As to quaternary structure, monomer. May form homodimers. Interacts with LNX, MAGI1, DLG4, PRKCABP, TJP1 and CTNNB1. Interacts with MPDZ; recruits MPDZ to intercellular contact sites. Interacts with JAML (homodimeric form). In terms of processing, N-glycosylated. Palmitoylated on Cys-259 and/or Cys-260; required for proper localization to the plasma membrane.

It localises to the cell membrane. The protein localises to the basolateral cell membrane. Its subcellular location is the cell junction. It is found in the tight junction. The protein resides in the adherens junction. In terms of biological role, component of the epithelial apical junction complex that may function as a homophilic cell adhesion molecule and is essential for tight junction integrity. Also involved in transepithelial migration of leukocytes through adhesive interactions with JAML a transmembrane protein of the plasma membrane of leukocytes. The interaction between both receptors also mediates the activation of gamma-delta T-cells, a subpopulation of T-cells residing in epithelia and involved in tissue homeostasis and repair. Upon epithelial CXADR-binding, JAML induces downstream cell signaling events in gamma-delta T-cells through PI3-kinase and MAP kinases. It results in proliferation and production of cytokines and growth factors by T-cells that in turn stimulate epithelial tissues repair. The sequence is that of Coxsackievirus and adenovirus receptor homolog (CXADR) from Bos taurus (Bovine).